We begin with the raw amino-acid sequence, 452 residues long: Bifunctional protein GlmU (452 aa).

Residues 1–226 form a pyrophosphorylase region; it reads MSLSVVILAA…ATEVEGVNTR (226 aa). UDP-N-acetyl-alpha-D-glucosamine-binding positions include 8 to 11, Lys22, Gln73, 78 to 79, 100 to 102, Gly137, Glu151, Asn166, and Asn224; these read LAAG, GT, and YGD. Residue Asp102 coordinates Mg(2+). Asn224 provides a ligand contact to Mg(2+). Positions 227 to 247 are linker; the sequence is LQLANLERAYQLKKATELLLS. The N-acetyltransferase stretch occupies residues 248–452; it reads GVMLRDPNRF…INNWKRPTKK (205 aa). UDP-N-acetyl-alpha-D-glucosamine contacts are provided by Arg330 and Lys348. The active-site Proton acceptor is the His360. Positions 363 and 374 each coordinate UDP-N-acetyl-alpha-D-glucosamine. Residues Ala377, 383–384, Ser402, Ala420, and Arg437 contribute to the acetyl-CoA site; that span reads NY.

It in the N-terminal section; belongs to the N-acetylglucosamine-1-phosphate uridyltransferase family. In the C-terminal section; belongs to the transferase hexapeptide repeat family. Homotrimer. Mg(2+) is required as a cofactor.

It is found in the cytoplasm. The enzyme catalyses alpha-D-glucosamine 1-phosphate + acetyl-CoA = N-acetyl-alpha-D-glucosamine 1-phosphate + CoA + H(+). The catalysed reaction is N-acetyl-alpha-D-glucosamine 1-phosphate + UTP + H(+) = UDP-N-acetyl-alpha-D-glucosamine + diphosphate. It functions in the pathway nucleotide-sugar biosynthesis; UDP-N-acetyl-alpha-D-glucosamine biosynthesis; N-acetyl-alpha-D-glucosamine 1-phosphate from alpha-D-glucosamine 6-phosphate (route II): step 2/2. The protein operates within nucleotide-sugar biosynthesis; UDP-N-acetyl-alpha-D-glucosamine biosynthesis; UDP-N-acetyl-alpha-D-glucosamine from N-acetyl-alpha-D-glucosamine 1-phosphate: step 1/1. Its pathway is bacterial outer membrane biogenesis; LPS lipid A biosynthesis. Functionally, catalyzes the last two sequential reactions in the de novo biosynthetic pathway for UDP-N-acetylglucosamine (UDP-GlcNAc). The C-terminal domain catalyzes the transfer of acetyl group from acetyl coenzyme A to glucosamine-1-phosphate (GlcN-1-P) to produce N-acetylglucosamine-1-phosphate (GlcNAc-1-P), which is converted into UDP-GlcNAc by the transfer of uridine 5-monophosphate (from uridine 5-triphosphate), a reaction catalyzed by the N-terminal domain. This Psychromonas ingrahamii (strain DSM 17664 / CCUG 51855 / 37) protein is Bifunctional protein GlmU.